A 242-amino-acid polypeptide reads, in one-letter code: Small ribosomal subunit protein uS3 (242 aa).

Positions 39–110 (IRRFIHKKYG…QVRINVVEVE (72 aa)) constitute a KH type-2 domain. The interval 217-242 (TMPVGASPRRRGNRRPQQFEDRSNEG) is disordered. Residues 233–242 (QQFEDRSNEG) are compositionally biased toward basic and acidic residues.

The protein belongs to the universal ribosomal protein uS3 family. As to quaternary structure, part of the 30S ribosomal subunit. Forms a tight complex with proteins S10 and S14.

Functionally, binds the lower part of the 30S subunit head. Binds mRNA in the 70S ribosome, positioning it for translation. The polypeptide is Small ribosomal subunit protein uS3 (Prochlorococcus marinus (strain MIT 9313)).